A 296-amino-acid polypeptide reads, in one-letter code: Nucleotide-binding protein str0831 (296 aa).

13-20 lines the ATP pocket; it reads GMSGAGKT. 63 to 66 lines the GTP pocket; that stretch reads DMRS.

It belongs to the RapZ-like family.

Its function is as follows. Displays ATPase and GTPase activities. This Streptococcus thermophilus (strain CNRZ 1066) protein is Nucleotide-binding protein str0831.